The following is a 118-amino-acid chain: Large ribosomal subunit protein bL20 (118 aa).

This sequence belongs to the bacterial ribosomal protein bL20 family.

Functionally, binds directly to 23S ribosomal RNA and is necessary for the in vitro assembly process of the 50S ribosomal subunit. It is not involved in the protein synthesizing functions of that subunit. The polypeptide is Large ribosomal subunit protein bL20 (Enterobacter sp. (strain 638)).